We begin with the raw amino-acid sequence, 94 residues long: Large ribosomal subunit protein bL31 (94 aa).

Positions 64 to 94 (KYGMANPDEDSTKNTKSSKKETSEDSSSKGS) are disordered. Positions 73-94 (DSTKNTKSSKKETSEDSSSKGS) are enriched in basic and acidic residues.

This sequence belongs to the bacterial ribosomal protein bL31 family. Type A subfamily. Part of the 50S ribosomal subunit.

Functionally, binds the 23S rRNA. The sequence is that of Large ribosomal subunit protein bL31 from Prochlorococcus marinus (strain SARG / CCMP1375 / SS120).